An 88-amino-acid chain; its full sequence is UPF0223 protein RBAM_014500 (88 aa).

It belongs to the UPF0223 family.

The sequence is that of UPF0223 protein RBAM_014500 from Bacillus velezensis (strain DSM 23117 / BGSC 10A6 / LMG 26770 / FZB42) (Bacillus amyloliquefaciens subsp. plantarum).